A 616-amino-acid polypeptide reads, in one-letter code: Dihydroxy-acid dehydratase (616 aa).

Mg(2+) is bound at residue Asp81. Position 122 (Cys122) interacts with [2Fe-2S] cluster. Asp123 and Lys124 together coordinate Mg(2+). At Lys124 the chain carries N6-carboxylysine. Cys195 is a binding site for [2Fe-2S] cluster. Glu491 is a Mg(2+) binding site. The Proton acceptor role is filled by Ser517.

This sequence belongs to the IlvD/Edd family. In terms of assembly, homodimer. [2Fe-2S] cluster is required as a cofactor. Mg(2+) serves as cofactor.

It carries out the reaction (2R)-2,3-dihydroxy-3-methylbutanoate = 3-methyl-2-oxobutanoate + H2O. The enzyme catalyses (2R,3R)-2,3-dihydroxy-3-methylpentanoate = (S)-3-methyl-2-oxopentanoate + H2O. The protein operates within amino-acid biosynthesis; L-isoleucine biosynthesis; L-isoleucine from 2-oxobutanoate: step 3/4. It functions in the pathway amino-acid biosynthesis; L-valine biosynthesis; L-valine from pyruvate: step 3/4. Functionally, functions in the biosynthesis of branched-chain amino acids. Catalyzes the dehydration of (2R,3R)-2,3-dihydroxy-3-methylpentanoate (2,3-dihydroxy-3-methylvalerate) into 2-oxo-3-methylpentanoate (2-oxo-3-methylvalerate) and of (2R)-2,3-dihydroxy-3-methylbutanoate (2,3-dihydroxyisovalerate) into 2-oxo-3-methylbutanoate (2-oxoisovalerate), the penultimate precursor to L-isoleucine and L-valine, respectively. This Salmonella heidelberg (strain SL476) protein is Dihydroxy-acid dehydratase.